The primary structure comprises 198 residues: Na(+)-translocating NADH-quinone reductase subunit E (198 aa).

Helical transmembrane passes span 11-31, 39-59, 77-97, 110-130, 140-160, and 176-196; these read SIFI…FLAV, MGLG…NNLI, FLSF…LEMA, GIFL…SFMV, VVYG…MAGI, and LGIT…FSGI.

The protein belongs to the NqrDE/RnfAE family. In terms of assembly, composed of six subunits; NqrA, NqrB, NqrC, NqrD, NqrE and NqrF.

The protein resides in the cell inner membrane. It carries out the reaction a ubiquinone + n Na(+)(in) + NADH + H(+) = a ubiquinol + n Na(+)(out) + NAD(+). Its function is as follows. NQR complex catalyzes the reduction of ubiquinone-1 to ubiquinol by two successive reactions, coupled with the transport of Na(+) ions from the cytoplasm to the periplasm. NqrA to NqrE are probably involved in the second step, the conversion of ubisemiquinone to ubiquinol. This is Na(+)-translocating NADH-quinone reductase subunit E from Aeromonas salmonicida (strain A449).